A 23-amino-acid polypeptide reads, in one-letter code: U1-ctenitoxin-Co1a (23 aa).

Cysteines 10 and 20 form a disulfide.

Expressed by the venom gland.

The protein resides in the secreted. Functionally, insecticidal neurotoxin that reversibly inhibits the N-methyl-D-aspartate (NMDA)-subtype of ionotropic glutamate receptor (GRIN) and inhibits inactivation of insect sodium channels (Nav). In vivo, is highly toxic to insects. This Ctenus ornatus (Brazilian spider) protein is U1-ctenitoxin-Co1a.